Here is a 315-residue protein sequence, read N- to C-terminus: Protein FRA10AC1 homolog (315 aa).

M1 carries the N-acetylmethionine modification. The tract at residues 1 to 28 is disordered; the sequence is MHGHGGYDSDFSDDEQGGGSSKKRKKTV. S9 and S12 each carry phosphoserine. K36 is subject to N6-acetyllysine. A compositionally biased stretch (basic residues) spans 225-235; the sequence is KEIKSTKKKSK. The disordered stretch occupies residues 225–308; that stretch reads KEIKSTKKKS…EKSQEEEFDD (84 aa). Composition is skewed to basic and acidic residues over residues 236–245 and 255–278; these read TTPECDESPR and EASK…NRNA. Phosphoserine is present on residues S283 and S285.

As to quaternary structure, interacts with ESS2.

The protein resides in the nucleus. May be involved in pre-mRNA splicing. The sequence is that of Protein FRA10AC1 homolog (Fra10ac1) from Mus musculus (Mouse).